The sequence spans 100 residues: NADH-quinone oxidoreductase subunit K 2 (100 aa).

3 helical membrane-spanning segments follow: residues 4–24 (LWWS…GVLL), 28–48 (ILIV…NFIA), and 60–80 (IFAI…LGIL).

The protein belongs to the complex I subunit 4L family. As to quaternary structure, NDH-1 is composed of 14 different subunits. Subunits NuoA, H, J, K, L, M, N constitute the membrane sector of the complex.

The protein localises to the cell inner membrane. The enzyme catalyses a quinone + NADH + 5 H(+)(in) = a quinol + NAD(+) + 4 H(+)(out). In terms of biological role, NDH-1 shuttles electrons from NADH, via FMN and iron-sulfur (Fe-S) centers, to quinones in the respiratory chain. The immediate electron acceptor for the enzyme in this species is believed to be ubiquinone. Couples the redox reaction to proton translocation (for every two electrons transferred, four hydrogen ions are translocated across the cytoplasmic membrane), and thus conserves the redox energy in a proton gradient. The protein is NADH-quinone oxidoreductase subunit K 2 of Rhizobium meliloti (strain 1021) (Ensifer meliloti).